The following is a 412-amino-acid chain: Cytochrome p450 CYP199A2 (412 aa).

Substrate-binding positions include 94-97 (RPPS) and S247. C361 lines the heme pocket.

This sequence belongs to the cytochrome P450 family. In terms of assembly, interacts with the ferredoxin-like iron-sulfur protein ThcC. The cofactor is heme.

It is found in the cytoplasm. The catalysed reaction is 4-methoxybenzoate + AH2 + O2 = 4-hydroxybenzoate + formaldehyde + A + H2O. Its function is as follows. The oxidative demethylation of 4-methoxybenzoate requires the participation of the monooxygenase CYP199A2, the ferredoxin-like protein ThcC/RPA1872 and a ferredoxin reductase to mediate the transfer of electrons from NADH to CYP199A2. It is also active with 4-ethylbenzoate. In Rhodopseudomonas palustris (strain ATCC BAA-98 / CGA009), this protein is Cytochrome p450 CYP199A2.